Reading from the N-terminus, the 156-residue chain is MQIIEGKLQLQGNEKIAILTSRFNHIITDRLKEGAMDCFKRHGGDEELLDLVLVPGAYELPLILDKLLESGKYDGVCVLGAIIRGGTPHFDYVSAEATKGIASAMLKYSMPVSFGVLTTDNIEQAIERAGSKAGNKGFEAMSTLIELLSLCQTLKD.

5-amino-6-(D-ribitylamino)uracil contacts are provided by residues phenylalanine 23, 57–59 (AYE), and 81–83 (AII). 86-87 (GT) provides a ligand contact to (2S)-2-hydroxy-3-oxobutyl phosphate. Histidine 89 acts as the Proton donor in catalysis. Phenylalanine 114 provides a ligand contact to 5-amino-6-(D-ribitylamino)uracil. A (2S)-2-hydroxy-3-oxobutyl phosphate-binding site is contributed by arginine 128.

It belongs to the DMRL synthase family.

The enzyme catalyses (2S)-2-hydroxy-3-oxobutyl phosphate + 5-amino-6-(D-ribitylamino)uracil = 6,7-dimethyl-8-(1-D-ribityl)lumazine + phosphate + 2 H2O + H(+). It participates in cofactor biosynthesis; riboflavin biosynthesis; riboflavin from 2-hydroxy-3-oxobutyl phosphate and 5-amino-6-(D-ribitylamino)uracil: step 1/2. In terms of biological role, catalyzes the formation of 6,7-dimethyl-8-ribityllumazine by condensation of 5-amino-6-(D-ribitylamino)uracil with 3,4-dihydroxy-2-butanone 4-phosphate. This is the penultimate step in the biosynthesis of riboflavin. The sequence is that of 6,7-dimethyl-8-ribityllumazine synthase from Helicobacter pylori (strain J99 / ATCC 700824) (Campylobacter pylori J99).